Consider the following 229-residue polypeptide: Putative ABC transporter permease protein ORF1 (229 aa).

The region spanning 23 to 214 (ALNSLLVALA…LPSLAFFALV (192 aa)) is the ABC transmembrane type-1 domain. 5 helical membrane passes run 27–47 (LLVA…MAYV), 62–82 (WVVV…FLVL), 91–111 (LTGL…WMLA), 150–170 (ATAL…LVLL), and 194–214 (SPAG…FALV).

It belongs to the binding-protein-dependent transport system permease family. MalFG subfamily.

The protein localises to the cell membrane. Its function is as follows. May participate in oleandomycin secretion during antibiotic production. The protein is Putative ABC transporter permease protein ORF1 of Streptomyces antibioticus.